Consider the following 522-residue polypeptide: Peptide chain release factor 3 (522 aa).

The region spanning 10–277 (ASRKTFAIIS…TFVDFAPSPS (268 aa)) is the tr-type G domain. GTP-binding positions include 19–26 (SHPDAGKT), 87–91 (DTPGH), and 141–144 (NKMD).

This sequence belongs to the TRAFAC class translation factor GTPase superfamily. Classic translation factor GTPase family. PrfC subfamily.

The protein localises to the cytoplasm. Increases the formation of ribosomal termination complexes and stimulates activities of RF-1 and RF-2. It binds guanine nucleotides and has strong preference for UGA stop codons. It may interact directly with the ribosome. The stimulation of RF-1 and RF-2 is significantly reduced by GTP and GDP, but not by GMP. The protein is Peptide chain release factor 3 of Listeria innocua serovar 6a (strain ATCC BAA-680 / CLIP 11262).